Reading from the N-terminus, the 469-residue chain is Transcription factor phomD (469 aa).

The segment at residues Cys14–Cys41 is a DNA-binding region (zn(2)-C6 fungal-type). A disordered region spans residues Thr49–Ala118. Polar residues predominate over residues Lys82 to Met93. Low complexity predominate over residues Gln104–Ala118.

It localises to the nucleus. Functionally, transcription factor; part of the gene cluster that mediates the biosynthesis of the phomopsins, a group of hexapeptide mycotoxins which infects lupins and causes lupinosis disease in livestock. May play a role in the regulation of the production of phomopsins. This Diaporthe leptostromiformis (Lupinosis disease fungus) protein is Transcription factor phomD.